The chain runs to 627 residues: Coiled-coil domain-containing protein 22 (627 aa).

The interval 1-321 is sufficient for interaction with COMMD1; sequence MEEADRILIH…VADIPAASQR (321 aa). A sufficicient and required for interaction with CCDC93 region spans residues 1–447; that stretch reads MEEADRILIH…LQDCRELESS (447 aa). Positions 321-384 form a coiled coil; sequence RPEQDTRAAQ…SVAEQEQALR (64 aa). Residue Ser-410 is modified to Phosphoserine. Positions 448-535 form a coiled coil; the sequence is RRLVEIQELH…NSLSGKLDRT (88 aa).

It belongs to the CCDC22 family. Component of the commander complex consisting of the CCC subcomplex and the retriever subcomplex. Component of the CCC (COMMD/CCDC22/CCDC93) subcomplex consisting of COMMD1, COMMD2, COMMD3, COMMD4, COMMD5, COMMD6, COMMD7, COMMD8, COMMD9, COMMD10, CCDC22 and CCDC93. Forms a coiled-coil heterodimer with CCDC22; this heterodimer interacts with the guanine nucleotide exchange factor DENND10; the interaction is direct. Interacts with CUL1, CUL2, CUL3, SKP1, BTRC. Interacts with SNX17 and SNX31. Interacts with CPNE1 and CPNE4.

It localises to the endosome. The protein localises to the cytoplasm. Its subcellular location is the cytoskeleton. The protein resides in the microtubule organizing center. It is found in the centrosome. Its function is as follows. Component of the commander complex that is essential for endosomal recycling of transmembrane cargos; the Commander complex is composed of composed of the CCC subcomplex and the retriever subcomplex. Component of the CCC complex, which is involved in the regulation of endosomal recycling of surface proteins, including integrins, signaling receptor and channels. Involved in regulation of NF-kappa-B signaling. Promotes ubiquitination of I-kappa-B-kinase subunit IKBKB and its subsequent proteasomal degradation leading to NF-kappa-B activation; the function may involve association with COMMD8 and a CUL1-dependent E3 ubiquitin ligase complex. May down-regulate NF-kappa-B activity via association with COMMD1 and involving a CUL2-dependent E3 ubiquitin ligase complex. Regulates the cellular localization of COMM domain-containing proteins, such as COMMD1 and COMMD10. Component of the CCC complex, which is involved in the regulation of endosomal recycling of surface proteins, including integrins, signaling receptor and channels. The CCC complex associates with SNX17, retriever and WASH complexes to prevent lysosomal degradation and promote cell surface recycling of numerous cargos such as integrins ITGA5:ITGB1. Plays a role in copper ion homeostasis. Involved in copper-dependent ATP7A trafficking between the trans-Golgi network and vesicles in the cell periphery; the function is proposed to depend on its association within the CCC complex and cooperation with the WASH complex on early endosomes. This chain is Coiled-coil domain-containing protein 22, found in Rattus norvegicus (Rat).